We begin with the raw amino-acid sequence, 370 residues long: Anhydro-N-acetylmuramic acid kinase (370 aa).

12–19 is an ATP binding site; that stretch reads GTSLDGVD.

The protein belongs to the anhydro-N-acetylmuramic acid kinase family.

It catalyses the reaction 1,6-anhydro-N-acetyl-beta-muramate + ATP + H2O = N-acetyl-D-muramate 6-phosphate + ADP + H(+). It functions in the pathway amino-sugar metabolism; 1,6-anhydro-N-acetylmuramate degradation. The protein operates within cell wall biogenesis; peptidoglycan recycling. Its function is as follows. Catalyzes the specific phosphorylation of 1,6-anhydro-N-acetylmuramic acid (anhMurNAc) with the simultaneous cleavage of the 1,6-anhydro ring, generating MurNAc-6-P. Is required for the utilization of anhMurNAc either imported from the medium or derived from its own cell wall murein, and thus plays a role in cell wall recycling. This is Anhydro-N-acetylmuramic acid kinase from Pectobacterium atrosepticum (strain SCRI 1043 / ATCC BAA-672) (Erwinia carotovora subsp. atroseptica).